Consider the following 91-residue polypeptide: Bombyxin C-1 (91 aa).

The signal sequence occupies residues 1–19 (MKLVMLLVVVSAMLVLGGA). Gln-20 is modified (pyrrolidone carboxylic acid). Disulfide bonds link Cys-27–Cys-76, Cys-39–Cys-89, and Cys-75–Cys-80. The propeptide at 47-67 (SGSQYAGYGWPWLPPFSSSRG) is c peptide like.

The protein belongs to the insulin family. As to quaternary structure, heterodimer of a B chain and an A chain linked by two disulfide bonds.

The protein resides in the secreted. Its function is as follows. Brain peptide responsible for activation of prothoracic glands to produce ecdysone in insects. This Bombyx mori (Silk moth) protein is Bombyxin C-1 (BBXC1).